Here is a 203-residue protein sequence, read N- to C-terminus: Urease accessory protein UreE (203 aa).

A disordered region spans residues 170–203 (EHHGHSHSHSHSHSHDHDHQHGPSCSHGHHHGHR).

It belongs to the UreE family.

It localises to the cytoplasm. In terms of biological role, involved in urease metallocenter assembly. Binds nickel. Probably functions as a nickel donor during metallocenter assembly. The chain is Urease accessory protein UreE from Burkholderia mallei (strain SAVP1).